Reading from the N-terminus, the 82-residue chain is U24 protein (82 aa).

The short motif at 7-10 is the PPXY motif element; it reads PPSY. A helical transmembrane segment spans residues 52 to 72; the sequence is FIILACLIISVILCLILILHI.

Interacts with host ITCH; this interaction probably mediates ITCH degradation. Interacts probably with NEDD4.

Its subcellular location is the membrane. In terms of biological role, down-regulates of the TCR/CD3E complex and the transferrin receptor TFRC in host T-cells by blocking them from recycling back to the cell surface. This Homo sapiens (Human) protein is U24 protein.